Here is a 335-residue protein sequence, read N- to C-terminus: AA9 family lytic polysaccharide monooxygenase A (335 aa).

The N-terminal stretch at 1–21 (MSSFITKTVLAALVAAAGVRA) is a signal peptide. Cu(2+) is bound by residues His22 and His107. A disulfide bond links Cys77 and Cys196. O2-binding residues include His182 and Gln191. Tyr193 contacts Cu(2+). The tract at residues 241–335 (PKMNIAGGSS…ARRHARDMMN (95 aa)) is disordered. Low complexity predominate over residues 251 to 303 (GAAPSTPATPTTGSGSDTPSNTAAPVESAPAESAAPVESAPAAGNGNQNNGGA). The segment covering 321–335 (CKAKKARRHARDMMN) has biased composition (basic residues).

This sequence belongs to the polysaccharide monooxygenase AA9 family. It depends on Cu(2+) as a cofactor.

It is found in the secreted. The catalysed reaction is [(1-&gt;4)-beta-D-glucosyl]n+m + reduced acceptor + O2 = 4-dehydro-beta-D-glucosyl-[(1-&gt;4)-beta-D-glucosyl]n-1 + [(1-&gt;4)-beta-D-glucosyl]m + acceptor + H2O.. Lytic polysaccharide monooxygenase (LPMO) that depolymerizes crystalline and amorphous polysaccharides via the oxidation of scissile alpha- or beta-(1-4)-glycosidic bonds, yielding C1 or C4 oxidation products. Catalysis by LPMOs requires the reduction of the active-site copper from Cu(II) to Cu(I) by a reducing agent and H(2)O(2) or O(2) as a cosubstrate. Is capable of cleaving cellulose, but not chitin. Is also active on tamarind xyloglucan and longer xyloglucan oligosaccharides. Has no activity toward shorter cellooligosaccharides (Glc3-6), as well as toward the xyloglucan-heptamer, birchwood xylan, wheat arabinoxylan, konjac glucomannan, ivory nut mannan, beta-glucan from barley, lichenan from Icelandic moss, starch, and spruce galactoglucomannan. Has unprecedented broad specificity on xyloglucan, cleaving any glycosidicbond in theb-glucan main chain, regardless of xylosyl substitutions. When incubated with a mixture of xyloglucan and cellulose, efficiently attacks the xyloglucan, whereas cellulose conversion is inhibited, suggesting that removal of hemicellulose may be the true function of this LPMO during biomass conversion. The polypeptide is AA9 family lytic polysaccharide monooxygenase A (Gibberella zeae (strain ATCC MYA-4620 / CBS 123657 / FGSC 9075 / NRRL 31084 / PH-1) (Wheat head blight fungus)).